The sequence spans 264 residues: SPRY domain-containing SOCS box protein 2 (264 aa).

The segment covering 1–19 (MGQTALARGSSSTPTSQAL) has biased composition (polar residues). Residues 1 to 34 (MGQTALARGSSSTPTSQALYSDFSPPEGLEELLS) are disordered. The B30.2/SPRY domain maps to 26–221 (PEGLEELLSA…VRIRYMGERR (196 aa)). One can recognise an SOCS box domain in the interval 222 to 264 (VEEPQSLLHLSRLCVRHALGDTRLGQISTLPLPPAMKRYLLYK).

The protein belongs to the SPSB family. Component of the probable ECS(SPSB2) E3 ubiquitin-protein ligase complex which contains CUL5, RNF7/RBX2, Elongin BC complex and SPSB2. Interacts with CUL5, RNF7, ELOB and ELOC. Interacts with MET. Interacts (via B30.2/SPRY domain) with PAWR; this interaction occurs in association with the Elongin BC complex. Interacts with NOS2.

It localises to the cytoplasm. It is found in the cytosol. It participates in protein modification; protein ubiquitination. Substrate recognition component of a SCF-like ECS (Elongin BC-CUL2/5-SOCS-box protein) E3 ubiquitin-protein ligase complex which mediates the ubiquitination and subsequent proteasomal degradation of target proteins. Negatively regulates nitric oxide (NO) production and limits cellular toxicity in activated macrophages by mediating the ubiquitination and proteasomal degradation of NOS2. Acts as a bridge which links NOS2 with the ECS E3 ubiquitin ligase complex components ELOC and CUL5. In Mus musculus (Mouse), this protein is SPRY domain-containing SOCS box protein 2 (Spsb2).